Here is a 124-residue protein sequence, read N- to C-terminus: Small ribosomal subunit protein uS12 (124 aa).

Asp89 bears the 3-methylthioaspartic acid mark.

It belongs to the universal ribosomal protein uS12 family. As to quaternary structure, part of the 30S ribosomal subunit. Contacts proteins S8 and S17. May interact with IF1 in the 30S initiation complex.

With S4 and S5 plays an important role in translational accuracy. Its function is as follows. Interacts with and stabilizes bases of the 16S rRNA that are involved in tRNA selection in the A site and with the mRNA backbone. Located at the interface of the 30S and 50S subunits, it traverses the body of the 30S subunit contacting proteins on the other side and probably holding the rRNA structure together. The combined cluster of proteins S8, S12 and S17 appears to hold together the shoulder and platform of the 30S subunit. In Shewanella oneidensis (strain ATCC 700550 / JCM 31522 / CIP 106686 / LMG 19005 / NCIMB 14063 / MR-1), this protein is Small ribosomal subunit protein uS12.